A 164-amino-acid chain; its full sequence is Diphosphoinositol polyphosphate phosphohydrolase 3-alpha (164 aa).

Residues arginine 9, 17–19, and 38–40 contribute to the substrate site; these read KKR and SSR. Residues 17-144 enclose the Nudix hydrolase domain; the sequence is KKRAACLCFR…VHAEYLEKLK (128 aa). The Mg(2+) site is built by glycine 49 and glutamate 65. The Nudix box signature appears at 50–71; that stretch reads GGMEPEEEPDGAAVREVYEEAG. The Proton acceptor role is filled by glutamate 68. Position 69 (glutamate 69) interacts with Mg(2+). Residues 89–91, arginine 115, and lysine 133 each bind substrate; that span reads RKH. The segment at 144 to 164 is disordered; it reads KLGGSPTNGNSAAPSPPESEP.

This sequence belongs to the Nudix hydrolase family. DIPP subfamily. It depends on Mg(2+) as a cofactor. Requires Mn(2+) as cofactor. In terms of tissue distribution, mainly expressed in testis, liver kidney and, at lower level, in heart, brain, spleen, lung and skeletal muscle.

The protein localises to the cytoplasm. It carries out the reaction diphospho-myo-inositol polyphosphate + H2O = myo-inositol polyphosphate + phosphate.. The catalysed reaction is P(1),P(6)-bis(5'-adenosyl) hexaphosphate + H2O = adenosine 5'-pentaphosphate + AMP + 2 H(+). The enzyme catalyses P(1),P(5)-bis(5'-adenosyl) pentaphosphate + H2O = adenosine 5'-tetraphosphate + AMP + 2 H(+). Its function is as follows. Cleaves a beta-phosphate from the diphosphate groups in PP-InsP5 (diphosphoinositol pentakisphosphate), suggesting that it may play a role in signal transduction. Also able to catalyze the hydrolysis of dinucleoside oligophosphates, with Ap6A and Ap5A being the preferred substrates. The major reaction products are ADP and p4a from Ap6A and ADP and ATP from Ap5A. Also able to hydrolyze 5-phosphoribose 1-diphosphate; however, the relevance of such activity in vivo remains unclear. This Mus musculus (Mouse) protein is Diphosphoinositol polyphosphate phosphohydrolase 3-alpha.